The primary structure comprises 84 residues: Small ribosomal subunit protein bS20 (84 aa).

The protein belongs to the bacterial ribosomal protein bS20 family.

Binds directly to 16S ribosomal RNA. This chain is Small ribosomal subunit protein bS20, found in Levilactobacillus brevis (strain ATCC 367 / BCRC 12310 / CIP 105137 / JCM 1170 / LMG 11437 / NCIMB 947 / NCTC 947) (Lactobacillus brevis).